Here is a 195-residue protein sequence, read N- to C-terminus: Alkyl hydroperoxide reductase C (195 aa).

Positions 4 to 170 (LTIGDQFPEY…VLRVLDALQS (167 aa)) constitute a Thioredoxin domain. Residue lysine 41 forms an Isoglutamyl lysine isopeptide (Lys-Gln) (interchain with Q-Cter in protein Pup) linkage. Cysteine 61 functions as the Cysteine sulfenic acid (-SOH) intermediate in the catalytic mechanism.

This sequence belongs to the peroxiredoxin family. AhpC/Prx1 subfamily. In terms of assembly, homodimer; disulfide-linked, upon oxidation. 6 homodimers assemble to form a ring-like dodecamer. Identified in a complex with AhpD, DlaT and Lpd.

It localises to the cytoplasm. It catalyses the reaction N(6)-[(R)-dihydrolipoyl]-L-lysyl-[lipoyl-carrier protein] + a hydroperoxide = N(6)-[(R)-lipoyl]-L-lysyl-[lipoyl-carrier protein] + an alcohol + H2O. Its function is as follows. Thiol-specific peroxidase that catalyzes the reduction of hydrogen peroxide and organic hydroperoxides to water and alcohols, respectively. Plays a role in cell protection against oxidative stress by detoxifying peroxides. Together with AhpD, DlaT and Lpd, constitutes an NADH-dependent peroxidase active against hydrogen and alkyl peroxides as well as serving as a peroxynitrite reductase, thus protecting the bacterium against reactive nitrogen intermediates and oxidative stress generated by the host immune system. Does not however seem to play a role in detoxification of isoniazid. This is Alkyl hydroperoxide reductase C from Mycolicibacterium smegmatis (strain ATCC 700084 / mc(2)155) (Mycobacterium smegmatis).